Reading from the N-terminus, the 311-residue chain is Homeobox-leucine zipper protein HOX13 (311 aa).

Residues 1–74 (MKRPTSSSRK…PSCGLGEKKR (74 aa)) form a disordered region. Residues 35-54 (DEAEMEEVDEEEEEEVDEDM) show a composition bias toward acidic residues. A DNA-binding region (homeobox) is located at residues 69-128 (LGEKKRRLALEQVRALERSFDTDNKLDPDRKARIARDLGLQPRQVAVWFQNRRARWKTKQ). The tract at residues 127–171 (KQLERDFAALRARHDALRADCDALRRDKDALAAEIRELREKLPTK) is leucine-zipper.

The protein belongs to the HD-ZIP homeobox family. Class I subfamily. In terms of tissue distribution, expressed in seedlings, roots, stems, leaf sheaths and blades and panicles.

It localises to the nucleus. Its function is as follows. Probable transcription factor. In Oryza sativa subsp. japonica (Rice), this protein is Homeobox-leucine zipper protein HOX13 (HOX13).